Reading from the N-terminus, the 89-residue chain is Small ribosomal subunit protein uS15 (89 aa).

The protein belongs to the universal ribosomal protein uS15 family. Part of the 30S ribosomal subunit. Forms a bridge to the 50S subunit in the 70S ribosome, contacting the 23S rRNA.

Functionally, one of the primary rRNA binding proteins, it binds directly to 16S rRNA where it helps nucleate assembly of the platform of the 30S subunit by binding and bridging several RNA helices of the 16S rRNA. Its function is as follows. Forms an intersubunit bridge (bridge B4) with the 23S rRNA of the 50S subunit in the ribosome. This Shewanella denitrificans (strain OS217 / ATCC BAA-1090 / DSM 15013) protein is Small ribosomal subunit protein uS15.